A 306-amino-acid polypeptide reads, in one-letter code: MWFRNLLVYRLTQDLQLDADALEKALGEKPARPCASQELTTYGFTAPFGKGPDAPLVHVSQDFFLVSARKEERILPGSVVRDALKEKVDEIEAQQMRKVYKKERDQLKDEIVQTLLPRAFIRRSSTFAAIAPSLGLILVDSASAKKAEDLLSTLREALGSLPVRPLSVKVAPTATLTDWVKTQEAAGDFHVLDECELRDTHEDGGVVRCKRQDLTSEEIQLHLTAGKLVTQLSLAWSDKLSFVLDDKLAVKRLRFEDLLQEQAEKDGGEDALGQLDASFTLMMLTFAEFLPALFEALGGEEIPQGV.

This sequence belongs to the RdgC family.

The protein localises to the cytoplasm. It is found in the nucleoid. In terms of biological role, may be involved in recombination. The chain is Recombination-associated protein RdgC from Pseudomonas paraeruginosa (strain DSM 24068 / PA7) (Pseudomonas aeruginosa (strain PA7)).